The following is a 419-amino-acid chain: MTTQLEQAWELAKQRFAAVGIDVEEALRQLDRLPVSMHCWQGDDVSGFENPEGSLTGGIQATGNYPGKARNASELRADLEQAMRLIPGPKRLNLHAIYLESDTPVSRDQIKPEHFKNWVEWAKANQLGLDFNPSCFSHPLSADGFTLSHPDDSIRQFWIDHCKASRRVSAYFGEQLGTPSVMNIWIPDGMKDITVDRLAPRQRLLAALDEVISEKLNPAHHIDAVESKLFGIGAESYTVGSNEFYMGYATSRQTALCLDAGHFHPTEVISDKISAAMLYVPQLLLHVSRPVRWDSDHVVLLDDETQAIASEIVRHDLFDRVHIGLDFFDASINRIAAWVIGTRNMKKALLRALLEPTAELRKLEAAGDYTARLALLEEQKSLPRQAVWEMYCQHHDTPAGSEWLESVRAYEKAILSQRG.

Residues H262, D294, and D296 each contribute to the Mn(2+) site.

This sequence belongs to the rhamnose isomerase family. Homotetramer. Requires Mn(2+) as cofactor.

Its subcellular location is the cytoplasm. The enzyme catalyses L-rhamnopyranose = L-rhamnulose. Its pathway is carbohydrate degradation; L-rhamnose degradation; glycerone phosphate from L-rhamnose: step 1/3. Functionally, catalyzes the interconversion of L-rhamnose and L-rhamnulose. This Shigella flexneri protein is L-rhamnose isomerase.